The primary structure comprises 216 residues: NKG2-D type II integral membrane protein (216 aa).

At 1 to 51 (MGWIRGRRSRHSWEMSEFHNYNLDLAKNDFSTRWQKQRCPVIKSKCRENTS) the chain is on the cytoplasmic side. A helical; Signal-anchor for type II membrane protein membrane pass occupies residues 52-72 (PLFFCCFIAVAMGIRFIVMVT). The Extracellular portion of the chain corresponds to 73-216 (IWSAVFLNSL…NTYICMQRTV (144 aa)). 2 disulfide bridges follow: cysteine 96–cysteine 105 and cysteine 99–cysteine 110. Positions 98 to 213 (PCPKNWICYK…STPNTYICMQ (116 aa)) constitute a C-type lectin domain. Residues asparagine 115, asparagine 131, asparagine 163, and asparagine 202 are each glycosylated (N-linked (GlcNAc...) asparagine). Cystine bridges form between cysteine 127–cysteine 211 and cysteine 189–cysteine 203.

In terms of assembly, homodimer; disulfide-linked. Heterohexamer composed of two subunits of KLRK1 and four subunits of HCST/DAP10. Interacts (via transmembrane domain) with HCST/DAP10 (via transmembrane domain); the interaction is required for KLRK1 NK cell surface and induces NK cell-mediated cytotoxicity. Can form disulfide-bonded heterodimer with CD94. Interacts with CEACAM1; recruits PTPN6 that dephosphorylates VAV1.

The protein resides in the cell membrane. In terms of biological role, functions as an activating and costimulatory receptor involved in immunosurveillance upon binding to various cellular stress-inducible ligands displayed at the surface of autologous tumor cells and virus-infected cells. Provides both stimulatory and costimulatory innate immune responses on activated killer (NK) cells, leading to cytotoxic activity. Acts as a costimulatory receptor for T-cell receptor (TCR) in CD8(+) T-cell-mediated adaptive immune responses by amplifying T-cell activation. Stimulates perforin-mediated elimination of ligand-expressing tumor cells. Signaling involves calcium influx, culminating in the expression of TNF-alpha. Participates in NK cell-mediated bone marrow graft rejection. May play a regulatory role in differentiation and survival of NK cells. Binds to ligands belonging to various subfamilies of MHC class I-related glycoproteins. This is NKG2-D type II integral membrane protein (KLRK1) from Pongo pygmaeus (Bornean orangutan).